Here is a 181-residue protein sequence, read N- to C-terminus: NADH-quinone oxidoreductase subunit I (181 aa).

2 consecutive 4Fe-4S ferredoxin-type domains span residues 52 to 81 and 91 to 120; these read TRDS…LKKG and KFFR…LTPD. 8 residues coordinate [4Fe-4S] cluster: Cys61, Cys64, Cys67, Cys71, Cys100, Cys103, Cys106, and Cys110.

The protein belongs to the complex I 23 kDa subunit family. NDH-1 is composed of 13 different subunits. Subunits NuoA, H, J, K, L, M, N constitute the membrane sector of the complex. The cofactor is [4Fe-4S] cluster.

It is found in the cell inner membrane. It carries out the reaction a quinone + NADH + 5 H(+)(in) = a quinol + NAD(+) + 4 H(+)(out). Its function is as follows. NDH-1 shuttles electrons from NADH, via FMN and iron-sulfur (Fe-S) centers, to quinones in the respiratory chain. The immediate electron acceptor for the enzyme in this species is believed to be ubiquinone. Couples the redox reaction to proton translocation (for every two electrons transferred, four hydrogen ions are translocated across the cytoplasmic membrane), and thus conserves the redox energy in a proton gradient. The chain is NADH-quinone oxidoreductase subunit I from Blochmanniella pennsylvanica (strain BPEN).